Reading from the N-terminus, the 146-residue chain is Protein SprT-like (146 aa).

The region spanning 4 to 142 (NEYVKQVSLE…GRCKGKLRLL (139 aa)) is the SprT-like domain. His64 provides a ligand contact to Zn(2+). Residue Glu65 is part of the active site. A Zn(2+)-binding site is contributed by His68.

It belongs to the SprT family. It depends on Zn(2+) as a cofactor.

It localises to the cytoplasm. The polypeptide is Protein SprT-like (Streptococcus gordonii (strain Challis / ATCC 35105 / BCRC 15272 / CH1 / DL1 / V288)).